The chain runs to 303 residues: Quinolinate synthase (303 aa).

Iminosuccinate is bound by residues His-23 and Ser-40. Cys-85 is a binding site for [4Fe-4S] cluster. Residues 111–113 and Ser-128 contribute to the iminosuccinate site; that span reads YVN. Cys-171 provides a ligand contact to [4Fe-4S] cluster. Iminosuccinate contacts are provided by residues 197-199 and Thr-214; that span reads HPE. Cys-259 is a [4Fe-4S] cluster binding site.

The protein belongs to the quinolinate synthase family. Type 2 subfamily. [4Fe-4S] cluster serves as cofactor.

It localises to the cytoplasm. The enzyme catalyses iminosuccinate + dihydroxyacetone phosphate = quinolinate + phosphate + 2 H2O + H(+). It functions in the pathway cofactor biosynthesis; NAD(+) biosynthesis; quinolinate from iminoaspartate: step 1/1. Its function is as follows. Catalyzes the condensation of iminoaspartate with dihydroxyacetone phosphate to form quinolinate. This Thermodesulfovibrio yellowstonii (strain ATCC 51303 / DSM 11347 / YP87) protein is Quinolinate synthase.